A 569-amino-acid polypeptide reads, in one-letter code: Cell death protein 4 (569 aa).

Residues 1–91 (MLCEIECRAL…HLKDFLDEYL (91 aa)) enclose the CARD domain. The 327-residue stretch at 116 to 442 (DRKLLLGNVP…IWSCVIPVDI (327 aa)) folds into the NB-ARC domain. Residues phenylalanine 131, 162-167 (GSGKSV), and glutamine 171 each bind ATP. Serine 166 lines the Mg(2+) pocket.

Associates as an asymmetric homodimer with ced-9. Upon release from ced-9, forms an octamer, known as the apoptosome, and interacts with ced-3; the interaction results in ced-3 autoproteolytic cleavage and activation. The octamer (a tetramer of an asymmetric dimer) also interacts with two processed ced-3 to form a stable holoenzyme. Interacts with sex-determining protein fem-1. May form a complex composed of ced-3, ced-4 and mac-1 or of ced-9, ced-4 and mac-1. Within the complex, interacts with ced-4.

The protein localises to the mitochondrion. Its subcellular location is the cytoplasm. It is found in the perinuclear region. Functionally, plays a major role in programmed cell death (PCD, apoptosis). egl-1 binds to and directly inhibits the activity of ced-9, releasing the cell death activator ced-4 from a ced-9/ced-4 containing protein complex and allowing ced-4 to induce caspase ced-3 autoproteolytic cleavage and activation. Also forms a holoenzyme with processed ced-3 enhancing ced-3 activity. Component of the egl-1, ced-9, ced-4 and ced-3 apoptotic signaling cascade required for the initiation of programmed cell death in cells fated to die during embryonic and postembryonic development. During oogenesis, required for germline apoptosis downstream of ced-9 and upstream of ced-3 but independently of egl-1. May regulate germline apoptosis in response to DNA damage, probably downstream of let-60/ras and mpk-1 pathway. Regulates CEP neuron apoptosis in response to high Al(3+) levels. During male tail morphogenesis, promotes apoptosis of the tail-spike cell. During larval development, required for the elimination of transient presynaptic components downstream of egl-1 and ced-9 and upstream of ced-3 apoptotic pathway. Together with ain-1, a component of the miRNA-induced-silencing complex (miRISC), and probably upstream of ced-3, regulates temporal cell fate patterning during larval development. May play a role in resistance to S.typhimurium-mediated infection. The sequence is that of Cell death protein 4 from Caenorhabditis briggsae.